We begin with the raw amino-acid sequence, 685 residues long: Putative lipase ROG1 (685 aa).

The active-site Charge relay system is Ser269.

The protein belongs to the putative lipase ROG1 family.

The protein is Putative lipase ROG1 (ROG1) of Saccharomyces cerevisiae (strain ATCC 204508 / S288c) (Baker's yeast).